We begin with the raw amino-acid sequence, 196 residues long: ATP-dependent Clp protease proteolytic subunit (196 aa).

Ser96 functions as the Nucleophile in the catalytic mechanism. His121 is an active-site residue.

Belongs to the peptidase S14 family. As to quaternary structure, fourteen ClpP subunits assemble into 2 heptameric rings which stack back to back to give a disk-like structure with a central cavity, resembling the structure of eukaryotic proteasomes.

It localises to the cytoplasm. It carries out the reaction Hydrolysis of proteins to small peptides in the presence of ATP and magnesium. alpha-casein is the usual test substrate. In the absence of ATP, only oligopeptides shorter than five residues are hydrolyzed (such as succinyl-Leu-Tyr-|-NHMec, and Leu-Tyr-Leu-|-Tyr-Trp, in which cleavage of the -Tyr-|-Leu- and -Tyr-|-Trp bonds also occurs).. Functionally, cleaves peptides in various proteins in a process that requires ATP hydrolysis. Has a chymotrypsin-like activity. Plays a major role in the degradation of misfolded proteins. The sequence is that of ATP-dependent Clp protease proteolytic subunit from Streptococcus gordonii (strain Challis / ATCC 35105 / BCRC 15272 / CH1 / DL1 / V288).